A 576-amino-acid chain; its full sequence is Proline--tRNA ligase (576 aa).

The protein belongs to the class-II aminoacyl-tRNA synthetase family. ProS type 1 subfamily. As to quaternary structure, homodimer.

The protein resides in the cytoplasm. The enzyme catalyses tRNA(Pro) + L-proline + ATP = L-prolyl-tRNA(Pro) + AMP + diphosphate. Functionally, catalyzes the attachment of proline to tRNA(Pro) in a two-step reaction: proline is first activated by ATP to form Pro-AMP and then transferred to the acceptor end of tRNA(Pro). As ProRS can inadvertently accommodate and process non-cognate amino acids such as alanine and cysteine, to avoid such errors it has two additional distinct editing activities against alanine. One activity is designated as 'pretransfer' editing and involves the tRNA(Pro)-independent hydrolysis of activated Ala-AMP. The other activity is designated 'posttransfer' editing and involves deacylation of mischarged Ala-tRNA(Pro). The misacylated Cys-tRNA(Pro) is not edited by ProRS. This Bordetella petrii (strain ATCC BAA-461 / DSM 12804 / CCUG 43448) protein is Proline--tRNA ligase.